The sequence spans 98 residues: NADH-ubiquinone oxidoreductase chain 4L (98 aa).

Helical transmembrane passes span 1–21 (MSMV…GLLM), 29–49 (SLLC…VTIL), and 61–81 (IILL…LVMV).

The protein belongs to the complex I subunit 4L family. Core subunit of respiratory chain NADH dehydrogenase (Complex I) which is composed of 45 different subunits.

Its subcellular location is the mitochondrion inner membrane. The enzyme catalyses a ubiquinone + NADH + 5 H(+)(in) = a ubiquinol + NAD(+) + 4 H(+)(out). Functionally, core subunit of the mitochondrial membrane respiratory chain NADH dehydrogenase (Complex I) which catalyzes electron transfer from NADH through the respiratory chain, using ubiquinone as an electron acceptor. Part of the enzyme membrane arm which is embedded in the lipid bilayer and involved in proton translocation. In Eumetopias jubatus (Steller sea lion), this protein is NADH-ubiquinone oxidoreductase chain 4L (MT-ND4L).